Reading from the N-terminus, the 92-residue chain is Small ribosomal subunit protein uS19 (92 aa).

This sequence belongs to the universal ribosomal protein uS19 family.

Protein S19 forms a complex with S13 that binds strongly to the 16S ribosomal RNA. This is Small ribosomal subunit protein uS19 from Buchnera aphidicola subsp. Acyrthosiphon pisum (strain 5A).